A 154-amino-acid polypeptide reads, in one-letter code: MGSVLVDLQIATENIEGLPTEEQIVQWATGAVQPEGNEVEMTVRIVDEAESHELNLTYRGKDRPTNVLSFPFECPDEVELPLLGDLVICRQVVEREAAEQEKPLMAHWAHMVVHGCLHLLGYDHIEDDEAEEMESLETQIMQGLGFDDPYLAEK.

3 residues coordinate Zn(2+): His-114, His-118, and His-124.

The protein belongs to the endoribonuclease YbeY family. The cofactor is Zn(2+).

Its subcellular location is the cytoplasm. Single strand-specific metallo-endoribonuclease involved in late-stage 70S ribosome quality control and in maturation of the 3' terminus of the 16S rRNA. The chain is Endoribonuclease YbeY from Haemophilus influenzae (strain 86-028NP).